A 466-amino-acid polypeptide reads, in one-letter code: MTTSPILQLLLRLSLCGLLLQRAETGSKGQTAGELYQRWERYRRECQETLAAAEPPSGLACNGSFDMYVCWDYAAPNATARASCPWYLPWHHHVAAGFVLRQCGSDGQWGLWRDHTQCENPEKNEAFLDQRLILERLQVMYTVGYSLSLATLLLALLILSLFRRLHCTRNYIHINLFTSFMLRAAAILSRDRLLPRPGPYLGDQALALWNQALAACRTAQIVTQYCVGANYTWLLVEGVYLHSLLVLVGGSEEGHFRYYLLLGWGAPALFVIPWVIVRYLYENTQCWERNEVKAIWWIIRTPILMTILINFLIFIRILGILLSKLRTRQMRCRDYRLRLARSTLTLVPLLGVHEVVFAPVTEEQARGALRFAKLGFEIFLSSFQGFLVSVLYCFINKEVQSEIRRGWHHCRLRRSLGEEQRQLPERAFRALPSGSGPGEVPTSRGLSSGTLPGPGNEASRELESYC.

A signal peptide spans 1–21 (MTTSPILQLLLRLSLCGLLLQ). Over 22–138 (RAETGSKGQT…DQRLILERLQ (117 aa)) the chain is Extracellular. 3 disulfides stabilise this stretch: cysteine 46/cysteine 70, cysteine 61/cysteine 103, and cysteine 84/cysteine 118. Asparagine 62 and asparagine 77 each carry an N-linked (GlcNAc...) asparagine glycan. A helical transmembrane segment spans residues 139–161 (VMYTVGYSLSLATLLLALLILSL). The Cytoplasmic segment spans residues 162–169 (FRRLHCTR). Residues 170-189 (NYIHINLFTSFMLRAAAILS) traverse the membrane as a helical segment. The Extracellular portion of the chain corresponds to 190-217 (RDRLLPRPGPYLGDQALALWNQALAACR). The helical transmembrane segment at 218–242 (TAQIVTQYCVGANYTWLLVEGVYLH) threads the bilayer. Residues 243-254 (SLLVLVGGSEEG) lie on the Cytoplasmic side of the membrane. The helical transmembrane segment at 255–278 (HFRYYLLLGWGAPALFVIPWVIVR) threads the bilayer. Residues 279–293 (YLYENTQCWERNEVK) lie on the Extracellular side of the membrane. The helical transmembrane segment at 294-319 (AIWWIIRTPILMTILINFLIFIRILG) threads the bilayer. Over 320–341 (ILLSKLRTRQMRCRDYRLRLAR) the chain is Cytoplasmic. A helical membrane pass occupies residues 342–362 (STLTLVPLLGVHEVVFAPVTE). Residues 363–377 (EQARGALRFAKLGFE) lie on the Extracellular side of the membrane. A helical transmembrane segment spans residues 378–398 (IFLSSFQGFLVSVLYCFINKE). The Cytoplasmic portion of the chain corresponds to 399–466 (VQSEIRRGWH…EASRELESYC (68 aa)). A disordered region spans residues 427-466 (AFRALPSGSGPGEVPTSRGLSSGTLPGPGNEASRELESYC).

Belongs to the G-protein coupled receptor 2 family. As to quaternary structure, may form homodimers and heterodimers with GLP1R. Post-translationally, N-glycosylation is required for cell surface expression and lengthens receptor half-life by preventing degradation in the ER.

It localises to the cell membrane. Its function is as follows. This is a receptor for GIP. The activity of this receptor is mediated by G proteins which activate adenylyl cyclase. The protein is Gastric inhibitory polypeptide receptor (GIPR) of Homo sapiens (Human).